The chain runs to 96 residues: Co-chaperonin GroES (96 aa).

This sequence belongs to the GroES chaperonin family. Heptamer of 7 subunits arranged in a ring. Interacts with the chaperonin GroEL.

The protein resides in the cytoplasm. In terms of biological role, together with the chaperonin GroEL, plays an essential role in assisting protein folding. The GroEL-GroES system forms a nano-cage that allows encapsulation of the non-native substrate proteins and provides a physical environment optimized to promote and accelerate protein folding. GroES binds to the apical surface of the GroEL ring, thereby capping the opening of the GroEL channel. The sequence is that of Co-chaperonin GroES from Paraburkholderia phymatum (strain DSM 17167 / CIP 108236 / LMG 21445 / STM815) (Burkholderia phymatum).